Reading from the N-terminus, the 329-residue chain is DNA-directed RNA polymerase subunit alpha (329 aa).

An alpha N-terminal domain (alpha-NTD) region spans residues 1–235 (MQGSVTEFLK…EQLDAFVDLR (235 aa)). The interval 249–329 (FDPILLRPVD…NWPPASIAED (81 aa)) is alpha C-terminal domain (alpha-CTD).

This sequence belongs to the RNA polymerase alpha chain family. In terms of assembly, homodimer. The RNAP catalytic core consists of 2 alpha, 1 beta, 1 beta' and 1 omega subunit. When a sigma factor is associated with the core the holoenzyme is formed, which can initiate transcription.

It carries out the reaction RNA(n) + a ribonucleoside 5'-triphosphate = RNA(n+1) + diphosphate. Its function is as follows. DNA-dependent RNA polymerase catalyzes the transcription of DNA into RNA using the four ribonucleoside triphosphates as substrates. This chain is DNA-directed RNA polymerase subunit alpha, found in Photobacterium profundum (strain SS9).